The sequence spans 115 residues: Large ribosomal subunit protein bL20 (115 aa).

This sequence belongs to the bacterial ribosomal protein bL20 family.

Functionally, binds directly to 23S ribosomal RNA and is necessary for the in vitro assembly process of the 50S ribosomal subunit. It is not involved in the protein synthesizing functions of that subunit. In Synechococcus sp. (strain RCC307), this protein is Large ribosomal subunit protein bL20.